Consider the following 524-residue polypeptide: Beta-glucosidase 23 (524 aa).

Positions 1 to 24 (MVLQKLPLIGLLLLLTIVASPANA) are cleaved as a signal peptide. Q54 serves as a coordination point for a beta-D-glucoside. N60 carries N-linked (GlcNAc...) asparagine glycosylation. Residues H157 and 202–203 (NE) contribute to the a beta-D-glucoside site. The Proton donor role is filled by E203. Cysteines 222 and 230 form a disulfide. 2 residues coordinate a beta-D-glucoside: Y346 and E418. The active-site Nucleophile is E418. A glycan (N-linked (GlcNAc...) asparagine) is linked at N461. Residues W468, 475 to 476 (EW), and F484 contribute to the a beta-D-glucoside site. N-linked (GlcNAc...) asparagine glycosylation is present at N494. Positions 521 to 524 (KDEL) match the Prevents secretion from ER motif.

The protein belongs to the glycosyl hydrolase 1 family. Homodimers. Binds to the deubiquitinating enzyme AMSH3. The inactive form interacts with PBP1/JAL30 to form the PYK10 complex, at least composed of PYK10/BGLU23, BGLU21, BGLU22, JAL22, JAL23, PBP1/JAL30, PBP2/JAL31, JAL32, JAL33, JAL34, JAL35, GLL22 and GLL23. Post-translationally, forms interchain disulfide bonds. In terms of tissue distribution, expressed exclusively in roots.

The protein localises to the endoplasmic reticulum lumen. The enzyme catalyses Hydrolysis of terminal, non-reducing beta-D-glucosyl residues with release of beta-D-glucose.. Its activity is regulated as follows. Activated by tissue damage and upon binding to PBP1 or PBP2. Functionally, beta-D-glucosidase active on scopolin &gt; esculin &gt;&gt; 4-MU-glucoside &gt;&gt; DIMBOA-glucoside. No activity with pNP-glucoside, oNP-glucoside and sinigrin as substrates. May possess beta-D-fucosidase activity. Required for the beneficial interaction with the endophytic fungus P.indica. May participate in the control of root colonization by P.indica by repressing defense responses and modulating other responses required for a mutualistic interaction. The protein is Beta-glucosidase 23 of Arabidopsis thaliana (Mouse-ear cress).